A 63-amino-acid polypeptide reads, in one-letter code: Large ribosomal subunit protein bL28 (63 aa).

A disordered region spans residues 1–20 (MSKRCAITGKGPMVGNNVSH).

The protein belongs to the bacterial ribosomal protein bL28 family.

The sequence is that of Large ribosomal subunit protein bL28 from Campylobacter concisus (strain 13826).